Here is a 230-residue protein sequence, read N- to C-terminus: ATP-dependent dethiobiotin synthetase BioD (230 aa).

An ATP-binding site is contributed by 12 to 17; that stretch reads DVGKTV. Thr-16 serves as a coordination point for Mg(2+). Lys-37 is an active-site residue. Thr-41 contacts substrate. ATP contacts are provided by residues Asp-49, 108–111, 168–169, and 198–200; these read EGAG, GS, and PEG. Mg(2+) is bound by residues Asp-49 and Glu-108.

Belongs to the dethiobiotin synthetase family. As to quaternary structure, homodimer. Mg(2+) is required as a cofactor.

Its subcellular location is the cytoplasm. It catalyses the reaction (7R,8S)-7,8-diammoniononanoate + CO2 + ATP = (4R,5S)-dethiobiotin + ADP + phosphate + 3 H(+). It functions in the pathway cofactor biosynthesis; biotin biosynthesis; biotin from 7,8-diaminononanoate: step 1/2. In terms of biological role, catalyzes a mechanistically unusual reaction, the ATP-dependent insertion of CO2 between the N7 and N8 nitrogen atoms of 7,8-diaminopelargonic acid (DAPA, also called 7,8-diammoniononanoate) to form a ureido ring. The polypeptide is ATP-dependent dethiobiotin synthetase BioD (Corynebacterium kroppenstedtii (strain DSM 44385 / JCM 11950 / CIP 105744 / CCUG 35717)).